The primary structure comprises 481 residues: Argininosuccinate lyase (481 aa).

The protein belongs to the lyase 1 family. Argininosuccinate lyase subfamily.

The protein localises to the cytoplasm. The catalysed reaction is 2-(N(omega)-L-arginino)succinate = fumarate + L-arginine. The protein operates within amino-acid biosynthesis; L-arginine biosynthesis; L-arginine from L-ornithine and carbamoyl phosphate: step 3/3. The polypeptide is Argininosuccinate lyase (Methanococcus maripaludis (strain DSM 14266 / JCM 13030 / NBRC 101832 / S2 / LL)).